A 181-amino-acid chain; its full sequence is tRNA-splicing endonuclease (181 aa).

Residues Tyr118, His126, and Lys157 contribute to the active site.

Belongs to the tRNA-intron endonuclease family. Archaeal short subfamily. Homotetramer; although the tetramer contains four active sites, only two participate in the cleavage. Therefore, it should be considered as a dimer of dimers.

It catalyses the reaction pretRNA = a 3'-half-tRNA molecule with a 5'-OH end + a 5'-half-tRNA molecule with a 2',3'-cyclic phosphate end + an intron with a 2',3'-cyclic phosphate and a 5'-hydroxyl terminus.. Its function is as follows. Endonuclease that removes tRNA introns. Cleaves pre-tRNA at the 5'- and 3'-splice sites to release the intron. The products are an intron and two tRNA half-molecules bearing 2',3' cyclic phosphate and 5'-OH termini. Recognizes a pseudosymmetric substrate in which 2 bulged loops of 3 bases are separated by a stem of 4 bp. In Sulfolobus acidocaldarius (strain ATCC 33909 / DSM 639 / JCM 8929 / NBRC 15157 / NCIMB 11770), this protein is tRNA-splicing endonuclease.